Consider the following 213-residue polypeptide: Nucleoside triphosphate pyrophosphatase (213 aa).

The active-site Proton acceptor is the D79.

The protein belongs to the Maf family. It depends on a divalent metal cation as a cofactor.

The protein localises to the cytoplasm. The enzyme catalyses a ribonucleoside 5'-triphosphate + H2O = a ribonucleoside 5'-phosphate + diphosphate + H(+). It catalyses the reaction a 2'-deoxyribonucleoside 5'-triphosphate + H2O = a 2'-deoxyribonucleoside 5'-phosphate + diphosphate + H(+). Functionally, nucleoside triphosphate pyrophosphatase. May have a dual role in cell division arrest and in preventing the incorporation of modified nucleotides into cellular nucleic acids. In Mycobacterium leprae (strain Br4923), this protein is Nucleoside triphosphate pyrophosphatase.